The sequence spans 295 residues: MDSSPVSARFDIFEIYRRFCAIRSGQQLCNKKPCDGEESQRFNLSKEAITQLLYLVENKFQARNSIFDELFKLMSRLDLMVDFTEFTCFYDFVFFMCRENGQKNITISRAITAWKLVLAGRFRLLNRWCDFIEKNQRHNISEDTWQQVLAFSRCVHENLEGYDSEGAWPVLIDDFVEHMYSILGPNKDTSLFCKCGDTESESCLYQEDEHHKDYRRPHTGLRNIPGLKRKTSKKNDEEEEDEDEEVLETQNSSSLLNFKRIKTSNSPRCSSKSPCSIERSLSQGFASLLSTGDKP.

Residues M1–Y180 form the DCUN1 domain. The Nuclear localization signal motif lies at Y214–L221. The disordered stretch occupies residues Y214–N251. Positions E237–L247 are enriched in acidic residues.

The protein localises to the nucleus. Its function is as follows. May contribute to the neddylation of all cullins by transferring NEDD8 from N-terminally acetylated NEDD8-conjugating E2s enzyme to different cullin C-terminal domain-RBX complexes; neddylation of cullins play an essential role in the regulation of SCF-type complexes activity. Regulates responses to the synthetic auxin 2,4-dichlorophenoxyacetic acid (2,4-D) in roots, probably by modulating the SCF(TIR1) ubiquitin E3 ligase complex-mediated proteolysis. This chain is Defective in cullin neddylation protein AAR3, found in Arabidopsis thaliana (Mouse-ear cress).